The chain runs to 163 residues: Centrosomal protein of 19 kDa (163 aa).

It belongs to the CEP19 family. Interacts with CEP43; this interaction is required for its localization to the mother centriole. Interacts (via residues 121-150) with RABL2B. Interacts (via C-terminus) with CEP350; this interaction is required for its localization to the mother centriole.

The protein localises to the cytoplasm. Its subcellular location is the cytoskeleton. The protein resides in the microtubule organizing center. It localises to the centrosome. It is found in the centriole. The protein localises to the spindle pole. Its subcellular location is the cilium basal body. Its function is as follows. Required for ciliation. Recruits the RABL2B GTPase to the ciliary base to initiate ciliation. After specifically capturing the activated GTP-bound RABL2B, the CEP19-RABL2B complex binds intraflagellar transport (IFT) complex B from the large pool pre-docked at the base of the cilium and thus triggers its entry into the cilia. Involved in the early steps in cilia formation by recruiting the ciliary vesicles (CVs) to the distal end of the mother centriole where they fuse to initiate cilium assembly. Involved in microtubule (MT) anchoring to the centrosomes. The chain is Centrosomal protein of 19 kDa (CEP19) from Homo sapiens (Human).